The chain runs to 326 residues: Glutaminase 2 (326 aa).

Substrate-binding residues include serine 73, asparagine 125, glutamate 169, asparagine 176, tyrosine 200, tyrosine 252, and valine 270.

This sequence belongs to the glutaminase family. As to quaternary structure, homotetramer.

It carries out the reaction L-glutamine + H2O = L-glutamate + NH4(+). This is Glutaminase 2 from Bacillus anthracis.